We begin with the raw amino-acid sequence, 261 residues long: Hemin import ATP-binding protein HmuV (261 aa).

The ABC transporter domain maps to 5 to 241 (LTANAASFAI…DLLARVFDVD (237 aa)). ATP is bound at residue 37-44 (GPNGAGKS).

It belongs to the ABC transporter superfamily. Heme (hemin) importer (TC 3.A.1.14.5) family. In terms of assembly, the complex is composed of two ATP-binding proteins (HmuV), two transmembrane proteins (HmuU) and a solute-binding protein (HmuT).

It is found in the cell inner membrane. Part of the ABC transporter complex HmuTUV involved in hemin import. Responsible for energy coupling to the transport system. This chain is Hemin import ATP-binding protein HmuV, found in Rhodopseudomonas palustris (strain BisB5).